The chain runs to 130 residues: Small ribosomal subunit protein uS8 (130 aa).

This sequence belongs to the universal ribosomal protein uS8 family. Part of the 30S ribosomal subunit.

Its function is as follows. One of the primary rRNA binding proteins, it binds directly to 16S rRNA central domain where it helps coordinate assembly of the platform of the 30S subunit. The polypeptide is Small ribosomal subunit protein uS8 (Methanosarcina barkeri (strain Fusaro / DSM 804)).